A 128-amino-acid polypeptide reads, in one-letter code: Sulfurtransferase TusD (128 aa).

Cys78 serves as the catalytic Cysteine persulfide intermediate.

The protein belongs to the DsrE/TusD family. As to quaternary structure, heterohexamer, formed by a dimer of trimers. The hexameric TusBCD complex contains 2 copies each of TusB, TusC and TusD. The TusBCD complex interacts with TusE.

Its subcellular location is the cytoplasm. Part of a sulfur-relay system required for 2-thiolation of 5-methylaminomethyl-2-thiouridine (mnm(5)s(2)U) at tRNA wobble positions. Accepts sulfur from TusA and transfers it in turn to TusE. The protein is Sulfurtransferase TusD of Buchnera aphidicola subsp. Acyrthosiphon pisum (strain 5A).